Reading from the N-terminus, the 276-residue chain is Diaminopimelate epimerase (276 aa).

Residues Asn-13, Gln-46, and Asn-66 each coordinate substrate. Residue Cys-75 is the Proton donor of the active site. Substrate is bound by residues 76-77, Asn-159, Asn-192, and 210-211; these read GN and ER. Cys-219 (proton acceptor) is an active-site residue. 220–221 provides a ligand contact to substrate; the sequence is GS.

Belongs to the diaminopimelate epimerase family. As to quaternary structure, homodimer.

The protein resides in the cytoplasm. The catalysed reaction is (2S,6S)-2,6-diaminopimelate = meso-2,6-diaminopimelate. Its pathway is amino-acid biosynthesis; L-lysine biosynthesis via DAP pathway; DL-2,6-diaminopimelate from LL-2,6-diaminopimelate: step 1/1. In terms of biological role, catalyzes the stereoinversion of LL-2,6-diaminopimelate (L,L-DAP) to meso-diaminopimelate (meso-DAP), a precursor of L-lysine and an essential component of the bacterial peptidoglycan. This is Diaminopimelate epimerase from Pseudoalteromonas atlantica (strain T6c / ATCC BAA-1087).